The following is a 329-amino-acid chain: Malate dehydrogenase (329 aa).

NAD(+) is bound at residue 12 to 18; sequence GAAGQIG. Residues Arg95 and Arg101 each contribute to the substrate site. Residues Asn108, Gln115, and 132–134 contribute to the NAD(+) site; that span reads VGN. Substrate is bound by residues Asn134 and Arg165. The active-site Proton acceptor is the His190.

Belongs to the LDH/MDH superfamily. MDH type 2 family.

The catalysed reaction is (S)-malate + NAD(+) = oxaloacetate + NADH + H(+). Functionally, catalyzes the reversible oxidation of malate to oxaloacetate. The sequence is that of Malate dehydrogenase from Bordetella petrii (strain ATCC BAA-461 / DSM 12804 / CCUG 43448).